The sequence spans 521 residues: Bifunctional purine biosynthesis protein PurH (521 aa).

The MGS-like domain maps to 1-147; that stretch reads MAVIKRALIS…KNNRDVTVVV (147 aa).

This sequence belongs to the PurH family.

It carries out the reaction (6R)-10-formyltetrahydrofolate + 5-amino-1-(5-phospho-beta-D-ribosyl)imidazole-4-carboxamide = 5-formamido-1-(5-phospho-D-ribosyl)imidazole-4-carboxamide + (6S)-5,6,7,8-tetrahydrofolate. The enzyme catalyses IMP + H2O = 5-formamido-1-(5-phospho-D-ribosyl)imidazole-4-carboxamide. It functions in the pathway purine metabolism; IMP biosynthesis via de novo pathway; 5-formamido-1-(5-phospho-D-ribosyl)imidazole-4-carboxamide from 5-amino-1-(5-phospho-D-ribosyl)imidazole-4-carboxamide (10-formyl THF route): step 1/1. The protein operates within purine metabolism; IMP biosynthesis via de novo pathway; IMP from 5-formamido-1-(5-phospho-D-ribosyl)imidazole-4-carboxamide: step 1/1. The protein is Bifunctional purine biosynthesis protein PurH of Syntrophotalea carbinolica (strain DSM 2380 / NBRC 103641 / GraBd1) (Pelobacter carbinolicus).